A 409-amino-acid polypeptide reads, in one-letter code: Immunity-related GTPase family M protein 1 (409 aa).

The 177-residue stretch at 75–251 (IPVSIFVTGD…PKLRDTLHKD (177 aa)) folds into the IRG-type G domain. Residues 84–91 (DSGNGMSS), 109–113 (TGVVR), and 191–193 (KLD) each bind GTP. Residue S202 is modified to Phosphoserine. 232-234 (SSL) is a GTP binding site. A Glycyl lysine isopeptide (Lys-Gly) (interchain with G-Cter in ubiquitin) cross-link involves residue K270. The alpha-K amphipathic helix stretch occupies residues 350–374 (KLRLMTCAIVNAFFRLLRFLPCVCC).

Belongs to the TRAFAC class dynamin-like GTPase superfamily. IRG family. Interacts with ULK1; promoting the coassembly of ULK1 and BECN1. Interacts with BECN1; enhancing BECN1-interacting partners and influencing the composition of the BECN1 complex. Interacts with ATG16L1. Interacts with NOD2; promoting Irgm1 'Lys-63'-linked polyubiquitination, which is required for interactions with the core autophagy factors. Interacts with STX17; promoting STX17 recruitment to autophagosomes. Interacts with ATG8 proteins (GABARAP, GABARAPL1, GABARAPL2, MAP1LC3A, MAP1LC3B and MAP1LC3C); promoting STX17 recruitment to autophagosomes. Interacts with TFEB; promoting association between TFEB and PPP3CB and TFEB dephosphorylation. Interacts with PPP3CB; promoting association between TFEB and PPP3CB and TFEB dephosphorylation. Interacts with NLRP3; preventing NLRP3 inflammasome assembly and promoting SQSTM1/p62-dependent autophagic degradation of NLRP3. Interacts with CGAS; promoting SQSTM1/p62-dependent autophagic degradation of CGAS. Interacts with RIGI/RIG-I; promoting SQSTM1/p62-dependent autophagic degradation of RIGI/RIG-I. Interacts with NOD1; promoting SQSTM1/p62-dependent autophagic degradation of RIGI/RIG-I. Interacts with NOD2; promoting SQSTM1/p62-dependent autophagic degradation of RIGI/RIG-I. Interacts with RIPK2; promoting SQSTM1/p62-dependent autophagic degradation of RIGI/RIG-I. Interacts with PIK3CA. Post-translationally, palmitoylated on C-terminal Cys residues. Palmitoylation, together with the alpha-K amphipathic helix, which binds phosphatidylinositol, mediate binding to membranes. In terms of processing, ubiquitinated via 'Lys-63'-linked polyubiquitination in a NOD2-dependent process. 'Lys-63'-linked polyubiquitination is required for interactions with the core autophagy factors. Ubiquitination at Lys-270 by the DCX(WDR77) complex, also named CLR4(WDR77) complex, in intestinal cells, leading to its degradation by the proteasome. Expressed in lung and primary macrophages.

The protein localises to the golgi apparatus membrane. It localises to the cell membrane. The protein resides in the cytoplasmic vesicle. It is found in the phagosome membrane. Its subcellular location is the autophagosome membrane. The protein localises to the lysosome membrane. It localises to the late endosome membrane. The protein resides in the mitochondrion membrane. It is found in the lipid droplet. Its subcellular location is the cell projection. The protein localises to the phagocytic cup. It carries out the reaction GTP + H2O = GDP + phosphate + H(+). Immunity-related GTPase that plays important roles in innate immunity and inflammatory response. Acts as a dynamin-like protein that binds to intracellular membranes and promotes remodeling and trafficking of those membranes. Required for clearance of acute protozoan and bacterial infections by interacting with autophagy and lysosome regulatory proteins, thereby promoting the fusion of phagosomes with lysosomes for efficient degradation of cargo including microbes. Regulates selective autophagy, including xenophagy and mitophagy, both directly and indirectly. Directly regulates autophagy by acting as a molecular adapter that promotes the coassembly of the core autophagy machinery to mediate antimicrobial defense: Irgm1 (1) activates AMPK, which in turn phosphorylates ULK1 and BECN1 to induce autophagy, (2) promotes the coassembly of ULK1 and BECN1, enhancing BECN1-interacting partners and (3) influences the composition of the BECN1 complex, by competing with the negative regulators BCL2 and RUBCN, to trigger autophagy. Also activates autophagy by promoting recruitment of STX17 to autophagosomes. In collaboration with ATG8 proteins, regulate lysosomal biogenesis, a fundamental process for any autophagic pathway, by promoting TFEB dephosphorylation. Also modulates autophagy by assisting with autophagosome formation and preventing lysosomal deacidification. Regulates autophagy by affecting mitochondrial fusion and fission. Also involved in M1 macrophage activation for the production of proinflammatory cytokines. While activating autophagy, acts as a key negative regulator of the inflammatory and interferon responses both by (1) promoting mitophagy and (2) mediating autophagy-dependent degradation of effectors of the inflammatory response. Promotes degradation of damaged and IFNG/IFN-gamma-stressed mitochondria via mitophagy, preventing cytosolic release of ligands that activate inflammation. Negatively regulates interferon-signaling in hematopoietic stem cells, preserving hematopoietic stem cell number and function. Promotes expansion of activated CD4(+) T-cells by inhibiting IFNG/IFN-gamma signaling, thereby preventing Ifng-mediated cell death of CD4(+) T-cells. Acts as a suppressor of inflammation by promoting recruitment of inflammation effectors, such as CGAS, RIGI/RIG-I and NLRP3, to autophagosome membranes, leading to their SQSTM1/p62-dependent autophagic degradation. Also directly inhibits assembly of the NLRP3 inflammasome by preventing the association between NLRP3 and PYCARD. Acts as a negative regulator of antiviral innate immune response by suppressing the RIPK2-dependent pro-inflammatory response: mediates recruitment of RIPosomes, composed of RIPK2 and NOD1 or NOD2, to autophagosome membranes, promoting their SQSTM1/p62-dependent autophagic degradation. This Mus musculus (Mouse) protein is Immunity-related GTPase family M protein 1.